A 159-amino-acid chain; its full sequence is Cytochrome c-type biogenesis protein CcmE (159 aa).

At 1–8 the chain is on the cytoplasmic side; it reads MNLRRKNR. A helical; Signal-anchor for type II membrane protein transmembrane segment spans residues 9–29; that stretch reads LWVVCAVLAGLGLTTALVLYA. Topologically, residues 30–159 are periplasmic; that stretch reads LRANIDLFYT…PQRADKDTSS (130 aa). The tract at residues 129–159 is disordered; sequence KHDENYTPPEVEKAMQENHRRPQRADKDTSS. H130 and Y134 together coordinate heme.

Belongs to the CcmE/CycJ family.

It is found in the cell inner membrane. In terms of biological role, heme chaperone required for the biogenesis of c-type cytochromes. Transiently binds heme delivered by CcmC and transfers the heme to apo-cytochromes in a process facilitated by CcmF and CcmH. This chain is Cytochrome c-type biogenesis protein CcmE, found in Salmonella typhimurium (strain LT2 / SGSC1412 / ATCC 700720).